The primary structure comprises 211 residues: FMN-dependent NADH:quinone oxidoreductase 3 (211 aa).

102-105 (MWNF) serves as a coordination point for FMN.

This sequence belongs to the azoreductase type 1 family. As to quaternary structure, homodimer. FMN serves as cofactor.

The catalysed reaction is 2 a quinone + NADH + H(+) = 2 a 1,4-benzosemiquinone + NAD(+). The enzyme catalyses N,N-dimethyl-1,4-phenylenediamine + anthranilate + 2 NAD(+) = 2-(4-dimethylaminophenyl)diazenylbenzoate + 2 NADH + 2 H(+). In terms of biological role, quinone reductase that provides resistance to thiol-specific stress caused by electrophilic quinones. Also exhibits azoreductase activity. Catalyzes the reductive cleavage of the azo bond in aromatic azo compounds to the corresponding amines. This chain is FMN-dependent NADH:quinone oxidoreductase 3, found in Bacillus cereus (strain ZK / E33L).